A 336-amino-acid chain; its full sequence is tRNA(Ile)-lysidine synthase (336 aa).

21 to 26 (SGGLDS) contributes to the ATP binding site.

This sequence belongs to the tRNA(Ile)-lysidine synthase family.

It is found in the cytoplasm. The catalysed reaction is cytidine(34) in tRNA(Ile2) + L-lysine + ATP = lysidine(34) in tRNA(Ile2) + AMP + diphosphate + H(+). Its function is as follows. Ligates lysine onto the cytidine present at position 34 of the AUA codon-specific tRNA(Ile) that contains the anticodon CAU, in an ATP-dependent manner. Cytidine is converted to lysidine, thus changing the amino acid specificity of the tRNA from methionine to isoleucine. The sequence is that of tRNA(Ile)-lysidine synthase from Helicobacter pylori (strain ATCC 700392 / 26695) (Campylobacter pylori).